We begin with the raw amino-acid sequence, 367 residues long: Undecaprenyl-phosphate alpha-N-acetylglucosaminyl 1-phosphate transferase (367 aa).

Transmembrane regions (helical) follow at residues 3–23, 46–66, 69–89, 132–152, 158–178, 187–207, 213–233, 242–262, 294–314, and 318–338; these read LLTV…FLFF, LIPL…FGIV, YIPH…IGAL, VLGP…INAF, IDGL…MILW, IWCF…LGIL, VFMG…ILLE, ISPV…VAIM, AFVL…LAEY, and VPEW…GYCI.

Belongs to the glycosyltransferase 4 family. WecA subfamily. The cofactor is Mg(2+). It depends on Mn(2+) as a cofactor.

Its subcellular location is the cell inner membrane. It carries out the reaction di-trans,octa-cis-undecaprenyl phosphate + UDP-N-acetyl-alpha-D-glucosamine = N-acetyl-alpha-D-glucosaminyl-di-trans,octa-cis-undecaprenyl diphosphate + UMP. The protein operates within bacterial outer membrane biogenesis; LPS O-antigen biosynthesis. Its pathway is bacterial outer membrane biogenesis; enterobacterial common antigen biosynthesis. Catalyzes the transfer of the GlcNAc-1-phosphate moiety from UDP-GlcNAc onto the carrier lipid undecaprenyl phosphate (C55-P), yielding GlcNAc-pyrophosphoryl-undecaprenyl (GlcNAc-PP-C55). This chain is Undecaprenyl-phosphate alpha-N-acetylglucosaminyl 1-phosphate transferase, found in Escherichia coli O157:H7.